The primary structure comprises 77 residues: Large ribosomal subunit protein bL28 (77 aa).

Belongs to the bacterial ribosomal protein bL28 family.

This Polynucleobacter necessarius subsp. necessarius (strain STIR1) protein is Large ribosomal subunit protein bL28.